A 116-amino-acid polypeptide reads, in one-letter code: Ribonuclease P protein component (116 aa).

Belongs to the RnpA family. In terms of assembly, consists of a catalytic RNA component (M1 or rnpB) and a protein subunit.

It carries out the reaction Endonucleolytic cleavage of RNA, removing 5'-extranucleotides from tRNA precursor.. RNaseP catalyzes the removal of the 5'-leader sequence from pre-tRNA to produce the mature 5'-terminus. It can also cleave other RNA substrates such as 4.5S RNA. The protein component plays an auxiliary but essential role in vivo by binding to the 5'-leader sequence and broadening the substrate specificity of the ribozyme. This chain is Ribonuclease P protein component, found in Carboxydothermus hydrogenoformans (strain ATCC BAA-161 / DSM 6008 / Z-2901).